Here is a 1454-residue protein sequence, read N- to C-terminus: Probable cleavage and polyadenylation specificity factor subunit 1 (1454 aa).

Residues 736-765 are disordered; that stretch reads KQSNTRKRKRLGHDAIQSSRGGEQSDAIDP.

Belongs to the CPSF1 family. In terms of assembly, CPSF is a heterotetramer composed of four distinct subunits 160 (cpsf-1), 100 (cpsf-2), 70 (cpsf-3), and 30 kDa (cpsf-4).

It is found in the nucleus. Functionally, CPSF plays a key role in pre-mRNA 3'-end formation, recognizing the AAUAAA signal sequence and interacting with poly(A)polymerase and other factors to bring about cleavage and poly(A) addition. This subunit is involved in the RNA recognition step of the polyadenylation reaction. The protein is Probable cleavage and polyadenylation specificity factor subunit 1 (cpsf-1) of Caenorhabditis elegans.